The primary structure comprises 59 residues: Chromatin protein Cren7 (59 aa).

Belongs to the Cren7 family. As to quaternary structure, monomer. Methylated at multiple sites, to varying extents.

The protein resides in the chromosome. It localises to the cytoplasm. Functionally, a chromatin protein, binds double-stranded DNA without sequence specificity. Constrains negative DNA supercoils. This is Chromatin protein Cren7 from Pyrobaculum neutrophilum (strain DSM 2338 / JCM 9278 / NBRC 100436 / V24Sta) (Thermoproteus neutrophilus).